The following is a 56-amino-acid chain: Large ribosomal subunit protein bL33 (56 aa).

It belongs to the bacterial ribosomal protein bL33 family.

This chain is Large ribosomal subunit protein bL33, found in Anaplasma marginale (strain Florida).